A 347-amino-acid chain; its full sequence is Haptoglobin (347 aa).

The first 18 residues, 1–18, serve as a signal peptide directing secretion; sequence MRALGAVITLLLWGQLFA. The region spanning 31-88 is the Sushi domain; that stretch reads DSCPKPPEIANGYVEHLVRYQCKNYYRLRTEGDGVYALNSEKQWVNKAVGEQLPECEA. 2 disulfide bridges follow: Cys-52–Cys-86 and Cys-90–Cys-207. One can recognise a Peptidase S1 domain in the interval 103-345; that stretch reads IIGGSLDAKG…ILDWIQKTIA (243 aa). Residues Asn-148, Asn-152, Asn-182, Asn-230, and Asn-256 are each glycosylated (N-linked (GlcNAc...) asparagine). Disulfide bonds link Cys-250–Cys-281 and Cys-292–Cys-322. Positions 259–264 are interaction with CD163; that stretch reads VPENKI.

Belongs to the peptidase S1 family. Tetramer of two alpha and two beta chains; disulfide-linked. The hemoglobin/haptoglobin complex is composed of a haptoglobin dimer bound to two hemoglobin alpha-beta dimers. Interacts with CD163. Interacts with ERGIC3. Expressed by the liver and secreted in plasma.

Its subcellular location is the secreted. Its function is as follows. As a result of hemolysis, hemoglobin is found to accumulate in the kidney and is secreted in the urine. Haptoglobin captures, and combines with free plasma hemoglobin to allow hepatic recycling of heme iron and to prevent kidney damage. Haptoglobin also acts as an antioxidant, has antibacterial activity and plays a role in modulating many aspects of the acute phase response. Hemoglobin/haptoglobin complexes are rapidly cleared by the macrophage CD163 scavenger receptor expressed on the surface of liver Kupfer cells through an endocytic lysosomal degradation pathway. This chain is Haptoglobin (HP), found in Oryctolagus cuniculus (Rabbit).